Reading from the N-terminus, the 917-residue chain is Interleukin-6 receptor subunit beta (917 aa).

A signal peptide spans 1–22 (MSAPRIWLAQALLFFLTTESIG). At 23-617 (QLLEPCGYIY…TPKFAQGEIE (595 aa)) the chain is on the extracellular side. The 95-residue stretch at 26–120 (EPCGYIYPEF…IEQNVYGVTM (95 aa)) folds into the Ig-like C2-type domain. Intrachain disulfides connect Cys-28–Cys-54 and Cys-48–Cys-103. N-linked (GlcNAc...) asparagine glycans are attached at residues Asn-43, Asn-61, Asn-83, and Asn-131. Fibronectin type-III domains follow at residues 128-221 (KPTN…VKPT), 222-322 (PPYN…TYED), 327-417 (PPSF…IPSP), 422-515 (AYSV…LKQA), and 517-611 (PARG…TPKF). Cys-134 and Cys-144 are disulfide-bonded. Asn-157 is a glycosylation site (N-linked (GlcNAc...) asparagine). Cys-172 and Cys-180 form a disulfide bridge. The N-linked (GlcNAc...) asparagine glycan is linked to Asn-225. A WSXWS motif motif is present at residues 308–312 (WSDWS). Residue Asn-388 is glycosylated (N-linked (GlcNAc...) asparagine). A disulfide bridge links Cys-456 with Cys-464. N-linked (GlcNAc...) asparagine glycosylation is found at Asn-476 and Asn-551. Residues 618 to 639 (AIVVPVCLAFLLTTLLGVLFCF) form a helical membrane-spanning segment. Over 640 to 917 (NKRDLIKKHI…TVRQGGYMPQ (278 aa)) the chain is Cytoplasmic. The Box 1 motif motif lies at 649 to 657 (IWPNVPDPS). 2 disordered regions span residues 658–678 (KSHI…NSKD) and 719–754 (TEGH…TAST). Phosphoserine occurs at positions 659 and 665. The span at 729–753 (SSCMSSSRPSISSNEENESAQSTAS) shows a compositional bias: low complexity. Phosphoserine is present on residues Ser-780, Ser-787, Ser-827, and Ser-837. The disordered stretch occupies residues 898-917 (EEIPKSYLPQTVRQGGYMPQ).

The protein belongs to the type I cytokine receptor family. Type 2 subfamily. Component of a hexamer of two molecules each of IL6, IL6R and IL6ST; associates with the complex IL6:IL6R but does not interact with IL6. Forms heterodimers composed of LIFR and IL6ST (type I OSM receptor) which are activated by LIF and OSM. Also forms heterodimers composed of OSMR and IL6ST (type II receptor) which are activated by OSM but not by LIF. Interacts with HCK. Interacts with INPP5D/SHIP1. Interacts with SRC and YES. Interacts with ARMH4; this interaction prevents IL6ST protein homodimerization and bridges ARMH4 with IL6R and STAT3 and therefore inhibits phosphorylation of STAT3 at 'Tyr-705'. Post-translationally, phosphorylation of Ser-780 down-regulates cell surface expression. In terms of processing, heavily N-glycosylated. Glycosylation is required for protein stability and localization in plasma membrane but not for ligand binding. In terms of tissue distribution, expression not restricted to IL6-responsive cells. Found in tissues such as brain, heart, thymus, spleen, kidney, lung and liver. Found in all the cell lines tested except BaF-B03. Expressed paraventricular nucleus of the hypothalamus.

The protein resides in the cell membrane. Signal-transducing molecule. The receptor systems for IL6, LIF, OSM, CNTF, IL11, CTF1 and BSF3 can utilize IL6ST for initiating signal transmission. Binding of IL6 to IL6R induces IL6ST homodimerization and formation of a high-affinity receptor complex, which activates the intracellular JAK-MAPK and JAK-STAT3 signaling pathways. That causes phosphorylation of IL6ST tyrosine residues which in turn activates STAT3. In parallel, the IL6 signaling pathway induces the expression of two cytokine receptor signaling inhibitors, SOCS1 and SOCS3, which inhibit JAK and terminate the activity of the IL6 signaling pathway as a negative feedback loop. Also activates the yes-associated protein 1 (YAP) and NOTCH pathways to control inflammation-induced epithelial regeneration, independently of STAT3. Mediates signals which regulate immune response, hematopoiesis, pain control and bone metabolism. Has a role in embryonic development. Essential for survival of motor and sensory neurons and for differentiation of astrocytes. Required for expression of TRPA1 in nociceptive neurons. Required for the maintenance of PTH1R expression in the osteoblast lineage and for the stimulation of PTH-induced osteoblast differentiation. Required for normal trabecular bone mass and cortical bone composition. The protein is Interleukin-6 receptor subunit beta of Mus musculus (Mouse).